The primary structure comprises 80 residues: Large ribosomal subunit protein bL31B (80 aa).

The protein belongs to the bacterial ribosomal protein bL31 family. Type B subfamily. As to quaternary structure, part of the 50S ribosomal subunit.

In Streptococcus mutans serotype c (strain ATCC 700610 / UA159), this protein is Large ribosomal subunit protein bL31B.